We begin with the raw amino-acid sequence, 363 residues long: tRNA dimethylallyltransferase (363 aa).

G65–S72 provides a ligand contact to ATP. T67 to S72 lines the substrate pocket. 2 interaction with substrate tRNA regions span residues D90–Q93 and Q214–R218.

The protein belongs to the IPP transferase family. As to quaternary structure, monomer. The cofactor is Mg(2+).

The catalysed reaction is adenosine(37) in tRNA + dimethylallyl diphosphate = N(6)-dimethylallyladenosine(37) in tRNA + diphosphate. Its function is as follows. Catalyzes the transfer of a dimethylallyl group onto the adenine at position 37 in tRNAs that read codons beginning with uridine, leading to the formation of N6-(dimethylallyl)adenosine (i(6)A). In Rickettsia rickettsii (strain Sheila Smith), this protein is tRNA dimethylallyltransferase.